A 482-amino-acid polypeptide reads, in one-letter code: tRNA sulfurtransferase (482 aa).

The 105-residue stretch at 61–165 (LAIRDALTRI…DDRLLLIKGR (105 aa)) folds into the THUMP domain. ATP contacts are provided by residues 183 to 184 (LI), Lys-265, Gly-287, and Gln-296. An intrachain disulfide couples Cys-344 to Cys-456. Residues 404-482 (FGPNDVILDI…GFENVKAYRP (79 aa)) form the Rhodanese domain. Cys-456 (cysteine persulfide intermediate) is an active-site residue.

It belongs to the ThiI family.

It is found in the cytoplasm. The enzyme catalyses [ThiI sulfur-carrier protein]-S-sulfanyl-L-cysteine + a uridine in tRNA + 2 reduced [2Fe-2S]-[ferredoxin] + ATP + H(+) = [ThiI sulfur-carrier protein]-L-cysteine + a 4-thiouridine in tRNA + 2 oxidized [2Fe-2S]-[ferredoxin] + AMP + diphosphate. It carries out the reaction [ThiS sulfur-carrier protein]-C-terminal Gly-Gly-AMP + S-sulfanyl-L-cysteinyl-[cysteine desulfurase] + AH2 = [ThiS sulfur-carrier protein]-C-terminal-Gly-aminoethanethioate + L-cysteinyl-[cysteine desulfurase] + A + AMP + 2 H(+). It functions in the pathway cofactor biosynthesis; thiamine diphosphate biosynthesis. Its function is as follows. Catalyzes the ATP-dependent transfer of a sulfur to tRNA to produce 4-thiouridine in position 8 of tRNAs, which functions as a near-UV photosensor. Also catalyzes the transfer of sulfur to the sulfur carrier protein ThiS, forming ThiS-thiocarboxylate. This is a step in the synthesis of thiazole, in the thiamine biosynthesis pathway. The sulfur is donated as persulfide by IscS. This Salmonella gallinarum (strain 287/91 / NCTC 13346) protein is tRNA sulfurtransferase.